A 171-amino-acid polypeptide reads, in one-letter code: Endoribonuclease ToxN (171 aa).

It belongs to the ToxN/AbiQ toxin family. As to quaternary structure, one ToxN monomer binds to a 36-nt-long single repeat of the ToxI RNA; this complex forms a triangular heterohexameric complex with ToxN connected by the ToxI RNA to another toxin molecule. The ToxI repeat forms a pseudoknot which occludes the toxin active site. Interaction of ToxI with ToxN partially inhibits the latter's endoribonuclease activity in vitro. The complex self-assembles in vitro with either full-length or processed single repeats; during the process the precursor is processed.

Toxic component of a type III toxin-antitoxin (TA) system. An endoribonuclease which is active independently of the ribosome, cleaving between the second and third A of AAA(U/G) sequences, although not all occurrences of this tetranucleotide are cleaved. Digests many mRNA species, including its own transcript and its cognate antitoxin RNA ToxI. ToxI has 5.5 nearly identical 36 nucleotide-long repeats (a single repeat neutralizes the toxin in vivo); a single repeat folds into a pseudoknot which binds the toxin. The ToxI precursor RNA is a preferential target in vivo and is progressively degraded to single repeat lengths as ToxN-ToxI complex self-assembly occurs. In vivo expression of ToxI antitoxin inhibits endonuclease activity of ToxN. The toxin alone inhibits growth when expressed in E.coli without causing cell lysis; this bacteriostatic effect is neutralized by cognate RNA antitoxin ToxI. Non-cognate antitoxin RNA from B.thuringiensis does not inhibit this toxin. The RNA antitoxin is less stable than the proteinaceous toxin; synthesis of ToxI in the absence of new ToxN synthesis restores growth and also detectable accumulation of the ToxN protein. Negatively regulates its own operon in complex with ToxI. The toxin-antitoxin system functions in plasmid maintenance (a plasmid addiction system). Its function is as follows. The TA system protects P.atrosepticum strain 1043 against phage phiM1 and phiA2, E.coli against some but not all coliphages and S.marcescens against some bacteriophages, causing an abortive infection (Abi phenotype). Also protects P.atrosepticum strain 1043 against phage phiTE; phage that escape Abi and grow in this bacterium have evolved a pseudo-ToxI RNA by expanding a pre-existing sequence similar to the bona fide ToxI repeats. The protein is Endoribonuclease ToxN of Pectobacterium atrosepticum (Erwinia carotovora subsp. atroseptica).